Consider the following 154-residue polypeptide: 6,7-dimethyl-8-ribityllumazine synthase (154 aa).

Residues phenylalanine 23, 57 to 59 (AFE), and 81 to 83 (AVI) each bind 5-amino-6-(D-ribitylamino)uracil. Residue 86 to 87 (AT) participates in (2S)-2-hydroxy-3-oxobutyl phosphate binding. Histidine 89 (proton donor) is an active-site residue. Phenylalanine 114 lines the 5-amino-6-(D-ribitylamino)uracil pocket. Position 128 (arginine 128) interacts with (2S)-2-hydroxy-3-oxobutyl phosphate.

It belongs to the DMRL synthase family.

The catalysed reaction is (2S)-2-hydroxy-3-oxobutyl phosphate + 5-amino-6-(D-ribitylamino)uracil = 6,7-dimethyl-8-(1-D-ribityl)lumazine + phosphate + 2 H2O + H(+). Its pathway is cofactor biosynthesis; riboflavin biosynthesis; riboflavin from 2-hydroxy-3-oxobutyl phosphate and 5-amino-6-(D-ribitylamino)uracil: step 1/2. Functionally, catalyzes the formation of 6,7-dimethyl-8-ribityllumazine by condensation of 5-amino-6-(D-ribitylamino)uracil with 3,4-dihydroxy-2-butanone 4-phosphate. This is the penultimate step in the biosynthesis of riboflavin. In Syntrophus aciditrophicus (strain SB), this protein is 6,7-dimethyl-8-ribityllumazine synthase.